Reading from the N-terminus, the 409-residue chain is uncharacterized protein (409 aa).

The signal sequence occupies residues 1–39 (MVSDSKLELPLPVNQQKPRRRRILKVHLLIAALILSAVG). Zn(2+) is bound by residues histidine 67, aspartate 69, glutamate 181, histidine 250, and histidine 271.

It belongs to the metallo-dependent hydrolases superfamily. Peptidase M19 family. In terms of assembly, interacts with dil1. Zn(2+) is required as a cofactor.

It catalyses the reaction an L-aminoacyl-L-amino acid + H2O = 2 an L-alpha-amino acid. This is an uncharacterized protein from Schizosaccharomyces pombe (strain 972 / ATCC 24843) (Fission yeast).